The primary structure comprises 339 residues: DNA-directed RNA polymerase subunit alpha (339 aa).

Residues Met-1–Glu-233 form an alpha N-terminal domain (alpha-NTD) region. The alpha C-terminal domain (alpha-CTD) stretch occupies residues Gly-266–Leu-339.

Belongs to the RNA polymerase alpha chain family. In plastids the minimal PEP RNA polymerase catalytic core is composed of four subunits: alpha, beta, beta', and beta''. When a (nuclear-encoded) sigma factor is associated with the core the holoenzyme is formed, which can initiate transcription.

It localises to the plastid. Its subcellular location is the chloroplast. It carries out the reaction RNA(n) + a ribonucleoside 5'-triphosphate = RNA(n+1) + diphosphate. In terms of biological role, DNA-dependent RNA polymerase catalyzes the transcription of DNA into RNA using the four ribonucleoside triphosphates as substrates. This chain is DNA-directed RNA polymerase subunit alpha, found in Saccharum hybrid (Sugarcane).